Consider the following 570-residue polypeptide: MVVEQIEVIEHRIIEEGRRPSGGPLLGNTVPFSTIRESRESYEQRADGTIHDRRYEVTGERDVSREPSFLHTSANYGQHIETSPPPVQRYNVSGATNSSFLNTSGDSRVSYPGADRSNDTTVINNYGYDIHEVRTDDGGARIIETHGSGPLRETSRIEHVEETITRPSAMRSSSAAAQRSSSNIFTVPAPAAHVSYRQEFASDNESLARKDSYRAMQSSWDGDEKKMTSTLNSRRFPPQSQTSLVSRETDQHSGKKIGCLKKIRTFYQGVRYAFENSEYTPELLRSLCCILLLLLLLLFLMFIIFNAIFNRYAVSEFLLYPPVCEECRRKNPALVSAALPSSVFVHFFSKHQAHFELRGNQPFKSNSFTAVDFNTGYVAYADHSLTDANGKHFTCFLMPLDRSAIDSIDQLSEAVSESSYEIQSTFGWQEFYQFDPEKIEPMTAKQKFTEEIDDCEGAQWYLLRQTVHARDASCSECYDFCLPDWAVVRKEKYEDESTLGVRRLNCFRLYVPQWSNFRVETDIGGGHWKYPLSSESTKRDKNGEWVHWIPTTNAQGFSRSRKSINNATLV.

The Cytoplasmic segment spans residues 1–288 (MVVEQIEVIE…YTPELLRSLC (288 aa)). Composition is skewed to polar residues over residues 93-107 (SGAT…SGDS) and 228-246 (TSTL…SLVS). Disordered regions lie at residues 93–116 (SGAT…GADR) and 218–248 (SSWD…VSRE). The helical transmembrane segment at 289 to 309 (CILLLLLLLLFLMFIIFNAIF) threads the bilayer. Residues 310-570 (NRYAVSEFLL…RKSINNATLV (261 aa)) lie on the Extracellular side of the membrane. A BRICHOS domain is found at 369 to 461 (TAVDFNTGYV…IDDCEGAQWY (93 aa)). Residues C395 and C455 are joined by a disulfide bond.

Its subcellular location is the membrane. This is BRICHOS domain-containing protein C09F5.1 from Caenorhabditis elegans.